The primary structure comprises 267 residues: Eukaryotic translation initiation factor 3 subunit J (267 aa).

Disordered regions lie at residues 1-128 and 220-241; these read MAPS…DIDL and KMREERAADKGNKKTKAAKTKV. Positions 28–46 are enriched in acidic residues; the sequence is DEEEEDVLDSWDAAEDSEV. A coiled-coil region spans residues 44-96; sequence SEVEREKAAKAAAAAAKAEAEAAAKKKSKAQRIEEHKQERKKQAEANESDEDS. Residues 74-88 show a composition bias toward basic and acidic residues; that stretch reads QRIEEHKQERKKQAE. Acidic residues predominate over residues 90-100; that stretch reads NESDEDSDEDE. Composition is skewed to basic and acidic residues over residues 108-121 and 220-231; these read RRTEKEGDLKHAQD and KMREERAADKGN.

Belongs to the eIF-3 subunit J family. As to quaternary structure, component of the eukaryotic translation initiation factor 3 (eIF-3) complex.

It is found in the cytoplasm. Component of the eukaryotic translation initiation factor 3 (eIF-3) complex, which is involved in protein synthesis of a specialized repertoire of mRNAs and, together with other initiation factors, stimulates binding of mRNA and methionyl-tRNAi to the 40S ribosome. The eIF-3 complex specifically targets and initiates translation of a subset of mRNAs involved in cell proliferation. The polypeptide is Eukaryotic translation initiation factor 3 subunit J (hcr1) (Neosartorya fischeri (strain ATCC 1020 / DSM 3700 / CBS 544.65 / FGSC A1164 / JCM 1740 / NRRL 181 / WB 181) (Aspergillus fischerianus)).